We begin with the raw amino-acid sequence, 343 residues long: Hydroxycarboxylic acid receptor 1 (343 aa).

Residues 1–21 lie on the Extracellular side of the membrane; the sequence is MDNGSCCLIEGEPISQVMPPL. N3 is a glycosylation site (N-linked (GlcNAc...) asparagine). Residues 22 to 42 form a helical membrane-spanning segment; it reads LILVFVLGALGNGIALCGFCF. Over 43-49 the chain is Cytoplasmic; sequence HMKTWKS. Residues 50–70 traverse the membrane as a helical segment; it reads STIYLFNLAVADFLLMICLPL. Over 71 to 90 the chain is Extracellular; it reads RTDYYLRRRHWIFGDIACRL. A disulfide bond links C88 and C165. Residues 91–111 form a helical membrane-spanning segment; the sequence is VLFKLAMNRAGSIVFLTVVAV. At 112–131 the chain is on the cytoplasmic side; the sequence is DRYFKVVHPHHMVNAISNRT. The chain crosses the membrane as a helical span at residues 132–152; it reads AAATACVLWTLVILGTVYLLM. Topologically, residues 153 to 182 are extracellular; that stretch reads ESHLCVQGTLSSCESFIMESANGWHDVMFQ. Residues 183-203 traverse the membrane as a helical segment; that stretch reads LEFFLPLTIILFCSVNVVWSL. Residues 204 to 220 lie on the Cytoplasmic side of the membrane; sequence RRRQQLTRQARMRRATR. Residues 221 to 241 traverse the membrane as a helical segment; the sequence is FIMVVASVFITCYLPSVLARL. Topologically, residues 242–259 are extracellular; sequence YFLWTVPTSACDPSVHTA. Residues 260-280 form a helical membrane-spanning segment; that stretch reads LHVTLSFTYLNSMLDPLVYYF. The Cytoplasmic portion of the chain corresponds to 281 to 343; the sequence is SSPSLPKFYT…SDGQWDLQVC (63 aa). A compositionally biased stretch (polar residues) spans 319–334; it reads CSKSSIDGANRSQRPS. The segment at 319 to 343 is disordered; it reads CSKSSIDGANRSQRPSDGQWDLQVC.

Belongs to the G-protein coupled receptor 1 family. Highly expressed in subcutaneous fat and omental fat and detectable in lower levels in brain and many other tissues. High levels detected in epididymal and subcutaneous fat with slightly lower in omental fat, low levels are detected in the brain, skeletal muscle, kidney, liver and the pancreas (at protein level).

It is found in the cell membrane. Its function is as follows. Acts as a receptor for L-lactate and mediates its anti-lipolytic effect through a G(i)-protein-mediated pathway. The chain is Hydroxycarboxylic acid receptor 1 (Hcar1) from Mus musculus (Mouse).